Here is a 302-residue protein sequence, read N- to C-terminus: Acetylglutamate kinase (302 aa).

Substrate contacts are provided by residues 68–69, Arg90, and Asn195; that span reads GG.

Belongs to the acetylglutamate kinase family. ArgB subfamily.

It is found in the cytoplasm. It carries out the reaction N-acetyl-L-glutamate + ATP = N-acetyl-L-glutamyl 5-phosphate + ADP. Its pathway is amino-acid biosynthesis; L-arginine biosynthesis; N(2)-acetyl-L-ornithine from L-glutamate: step 2/4. Its function is as follows. Catalyzes the ATP-dependent phosphorylation of N-acetyl-L-glutamate. This is Acetylglutamate kinase from Marinomonas sp. (strain MWYL1).